Reading from the N-terminus, the 147-residue chain is Lysozyme C (147 aa).

The signal sequence occupies residues 1-18 (MRSLLILVLCFLPLAALG). Residues 19 to 147 (KVYGRCELAA…VHAWIRGCRL (129 aa)) form the C-type lysozyme domain. Disulfide bonds link Cys24/Cys145, Cys48/Cys133, Cys82/Cys98, and Cys94/Cys112.

Belongs to the glycosyl hydrolase 22 family. As to quaternary structure, monomer.

Its subcellular location is the secreted. It carries out the reaction Hydrolysis of (1-&gt;4)-beta-linkages between N-acetylmuramic acid and N-acetyl-D-glucosamine residues in a peptidoglycan and between N-acetyl-D-glucosamine residues in chitodextrins.. Its function is as follows. Lysozymes have primarily a bacteriolytic function; those in tissues and body fluids are associated with the monocyte-macrophage system and enhance the activity of immunoagents. This is Lysozyme C (LYZ) from Meleagris gallopavo (Wild turkey).